Consider the following 262-residue polypeptide: uncharacterized protein (262 aa).

Positions 1 to 211 (MAFHVMIIPS…LLYLLDSYLE (211 aa)) constitute a Radical SAM core domain. Residues Cys13, Cys17, and Cys20 each coordinate [4Fe-4S] cluster.

This sequence belongs to the radical SAM superfamily. Anaerobic sulfatase-maturating enzyme family. [4Fe-4S] cluster serves as cofactor.

This is an uncharacterized protein from Methanothermobacter thermautotrophicus (strain ATCC 29096 / DSM 1053 / JCM 10044 / NBRC 100330 / Delta H) (Methanobacterium thermoautotrophicum).